The following is a 239-amino-acid chain: Non-structural protein V (239 aa).

2 disordered regions span residues Pro-30 to Ala-104 and Asn-126 to Glu-180. The segment covering Thr-65–Lys-74 has biased composition (basic and acidic residues). Polar residues-rich tracts occupy residues Pro-89–Thr-98 and Ala-143–Glu-153. Zn(2+) contacts are provided by His-177, Cys-196, Cys-200, Cys-212, Cys-214, Cys-217, Cys-221, and Cys-224.

Interacts with host STAT1. Interacts with host TXNL1. Interacts (via C-terminus) with host CacyBP; this interaction inhibits host cell apoptosis.

It localises to the host cytoplasm. Its subcellular location is the host nucleus. Its function is as follows. Protects the virus against cell antiviral state by blocking host interferon signaling. Mechanistically, targets host phosphorylated STAT1 (phospho-STAT1) for degradation, thereby inhibiting the interferon alpha signaling pathway. Plays a role in the inhibition of host apoptosis. Interacts with and down-regulates the expression of host TXNL1. In turn, inhibits TXNL1-induced apoptosis through the BCL2-BAX-caspase 3 pathway. Inhibits host apoptosis also by negatively regulating host CacyBP/SIP. Promotes viral replication by activating the extracellular signal-regulated kinase (ERK) pathway. The polypeptide is Non-structural protein V (P/V) (Gallus gallus (Chicken)).